Reading from the N-terminus, the 276-residue chain is Large ribosomal subunit protein uL2 (276 aa).

Residues 212–276 form a disordered region; sequence NRHRGIRPQT…KLIISRKKHK (65 aa). Over residues 257-276 the composition is skewed to basic residues; that stretch reads YKTRKKKASDKLIISRKKHK.

The protein belongs to the universal ribosomal protein uL2 family. Part of the 50S ribosomal subunit. Forms a bridge to the 30S subunit in the 70S ribosome.

Its function is as follows. One of the primary rRNA binding proteins. Required for association of the 30S and 50S subunits to form the 70S ribosome, for tRNA binding and peptide bond formation. It has been suggested to have peptidyltransferase activity; this is somewhat controversial. Makes several contacts with the 16S rRNA in the 70S ribosome. In Helicobacter acinonychis (strain Sheeba), this protein is Large ribosomal subunit protein uL2.